A 436-amino-acid polypeptide reads, in one-letter code: Exodeoxyribonuclease 7 large subunit (436 aa).

The interval 412-436 (PGGVMNKNSNTTDSTDNTENGTGEA) is disordered. A compositionally biased stretch (low complexity) spans 417-436 (NKNSNTTDSTDNTENGTGEA).

The protein belongs to the XseA family. In terms of assembly, heterooligomer composed of large and small subunits.

The protein localises to the cytoplasm. It catalyses the reaction Exonucleolytic cleavage in either 5'- to 3'- or 3'- to 5'-direction to yield nucleoside 5'-phosphates.. Functionally, bidirectionally degrades single-stranded DNA into large acid-insoluble oligonucleotides, which are then degraded further into small acid-soluble oligonucleotides. This chain is Exodeoxyribonuclease 7 large subunit, found in Corynebacterium jeikeium (strain K411).